Reading from the N-terminus, the 442-residue chain is Kelch domain-containing protein 10 (442 aa).

The tract at residues methionine 1–lysine 57 is disordered. At arginine 13 the chain carries Omega-N-methylarginine. The span at glycine 15–threonine 39 shows a compositional bias: gly residues. Kelch repeat units follow at residues arginine 87–leucine 154, alanine 155–serine 198, cysteine 199–arginine 260, tyrosine 261–histidine 319, serine 320–valine 364, and tyrosine 365–proline 403. Residues valine 401–lysine 442 form an interaction with CUL2 region.

The protein belongs to the KLHDC10 family. Component of a CRL2 E3 ubiquitin-protein ligase complex, also named ECS (Elongin BC-CUL2/5-SOCS-box protein) complex, composed of CUL2, Elongin BC (ELOB and ELOC), RBX1 and substrate-specific adapter KLHDC10. Interacts (via the 6 Kelch repeats) with PPP5C.

The protein localises to the nucleus. It is found in the cytoplasm. The protein operates within protein modification; protein ubiquitination. In terms of biological role, substrate-recognition component of a Cul2-RING (CRL2) E3 ubiquitin-protein ligase complex of the DesCEND (destruction via C-end degrons) pathway, which recognizes a C-degron located at the extreme C-terminus of target proteins, leading to their ubiquitination and degradation. The C-degron recognized by the DesCEND pathway is usually a motif of less than ten residues and can be present in full-length proteins, truncated proteins or proteolytically cleaved forms. The CRL2(KLHDC10) complex specifically recognizes proteins with a proline-glycine (Pro-Gly) or an alanine tail (CAT tail) at the C-terminus, leading to their ubiquitination and degradation. The CRL2(KLHDC10) complex is involved in the ribosome-associated quality control (RQC) pathway, which mediates the extraction of incompletely synthesized nascent chains from stalled ribosomes: CRL2(KLHDC10) acts downstream of NEMF and recognizes CAT tails associated with stalled nascent chains, leading to their ubiquitination and degradation. Participates in the oxidative stress-induced cell death through MAP3K5 activation. Inhibits PPP5C phosphatase activity on MAP3K5. Acts as a regulator of necroptosis. This chain is Kelch domain-containing protein 10, found in Homo sapiens (Human).